We begin with the raw amino-acid sequence, 401 residues long: Acetylornithine aminotransferase (401 aa).

Residues 121 to 122 and Phe154 contribute to the pyridoxal 5'-phosphate site; that span reads GA. Position 157 (Arg157) interacts with N(2)-acetyl-L-ornithine. 239–242 contributes to the pyridoxal 5'-phosphate binding site; that stretch reads DEVQ. Lys268 is modified (N6-(pyridoxal phosphate)lysine). Ser296 serves as a coordination point for N(2)-acetyl-L-ornithine. Thr297 contacts pyridoxal 5'-phosphate.

The protein belongs to the class-III pyridoxal-phosphate-dependent aminotransferase family. ArgD subfamily. As to quaternary structure, homodimer. Pyridoxal 5'-phosphate is required as a cofactor.

The protein localises to the cytoplasm. The catalysed reaction is N(2)-acetyl-L-ornithine + 2-oxoglutarate = N-acetyl-L-glutamate 5-semialdehyde + L-glutamate. Its pathway is amino-acid biosynthesis; L-arginine biosynthesis; N(2)-acetyl-L-ornithine from L-glutamate: step 4/4. The protein is Acetylornithine aminotransferase of Myxococcus xanthus.